A 223-amino-acid polypeptide reads, in one-letter code: MTTQDELKRIAAEKAVEFVPENEYIGIGTGSTINFFIEALGKSGKKIKGAVSTSKKSSELLAQYDIPVVSLNEVSGLAVYIDGADEVNHALQMIKGGGGAHLNEKIVASASEKFVCIADESKYVSRLGKFPLPVEVVESARSLVSRKLLAMGGQPELRIGYTTFYGNQIVDVHGLNIDQPLTMEDEINKITGVLENGIFARDAADVLILGTEEGAKVIYPCQG.

Substrate is bound by residues 29-32, 82-85, and 95-98; these read TGST, DGAD, and KGGG. Glutamate 104 (proton acceptor) is an active-site residue. A substrate-binding site is contributed by lysine 122.

Belongs to the ribose 5-phosphate isomerase family. Homodimer.

The catalysed reaction is aldehydo-D-ribose 5-phosphate = D-ribulose 5-phosphate. The protein operates within carbohydrate degradation; pentose phosphate pathway; D-ribose 5-phosphate from D-ribulose 5-phosphate (non-oxidative stage): step 1/1. Catalyzes the reversible conversion of ribose-5-phosphate to ribulose 5-phosphate. The polypeptide is Ribose-5-phosphate isomerase A (Neisseria meningitidis serogroup C (strain 053442)).